The primary structure comprises 73 residues: Translation initiation factor IF-1 1 (73 aa).

The 72-residue stretch at 1-72 (MAKEELIEFG…TKGRINFRHK (72 aa)) folds into the S1-like domain.

This sequence belongs to the IF-1 family. As to quaternary structure, component of the 30S ribosomal translation pre-initiation complex which assembles on the 30S ribosome in the order IF-2 and IF-3, IF-1 and N-formylmethionyl-tRNA(fMet); mRNA recruitment can occur at any time during PIC assembly.

The protein resides in the cytoplasm. One of the essential components for the initiation of protein synthesis. Stabilizes the binding of IF-2 and IF-3 on the 30S subunit to which N-formylmethionyl-tRNA(fMet) subsequently binds. Helps modulate mRNA selection, yielding the 30S pre-initiation complex (PIC). Upon addition of the 50S ribosomal subunit IF-1, IF-2 and IF-3 are released leaving the mature 70S translation initiation complex. This chain is Translation initiation factor IF-1 1, found in Cupriavidus pinatubonensis (strain JMP 134 / LMG 1197) (Cupriavidus necator (strain JMP 134)).